Reading from the N-terminus, the 353-residue chain is DNA-directed RNA polymerase subunit alpha (353 aa).

Residues 1–234 (MVREKVTVST…DLFIPFLHTE (234 aa)) are alpha N-terminal domain (alpha-NTD). The tract at residues 267–353 (KRALKSIFID…LAQLIDSKSG (87 aa)) is alpha C-terminal domain (alpha-CTD).

This sequence belongs to the RNA polymerase alpha chain family. In plastids the minimal PEP RNA polymerase catalytic core is composed of four subunits: alpha, beta, beta', and beta''. When a (nuclear-encoded) sigma factor is associated with the core the holoenzyme is formed, which can initiate transcription.

Its subcellular location is the plastid. The protein resides in the chloroplast. It catalyses the reaction RNA(n) + a ribonucleoside 5'-triphosphate = RNA(n+1) + diphosphate. In terms of biological role, DNA-dependent RNA polymerase catalyzes the transcription of DNA into RNA using the four ribonucleoside triphosphates as substrates. In Daucus carota (Wild carrot), this protein is DNA-directed RNA polymerase subunit alpha.